A 304-amino-acid polypeptide reads, in one-letter code: Probable endonuclease 4 (304 aa).

Zn(2+)-binding residues include His-75, His-115, Glu-151, Asp-185, His-188, His-221, Asp-234, His-236, and Glu-266.

It belongs to the AP endonuclease 2 family. Zn(2+) is required as a cofactor.

It carries out the reaction Endonucleolytic cleavage to 5'-phosphooligonucleotide end-products.. Its function is as follows. Endonuclease IV plays a role in DNA repair. It cleaves phosphodiester bonds at apurinic or apyrimidinic (AP) sites, generating a 3'-hydroxyl group and a 5'-terminal sugar phosphate. The polypeptide is Probable endonuclease 4 (Ureaplasma urealyticum serovar 10 (strain ATCC 33699 / Western)).